An 809-amino-acid chain; its full sequence is Lethal factor (809 aa).

The signal sequence occupies residues 1-33 (MNIKKEFIKVISMSCLVTAITLSGPVFIPLVQG). Positions 39-66 (DVGMHVKEKEKNKDENKRKDEERNKTQE) are disordered. Residues 40 to 66 (VGMHVKEKEKNKDENKRKDEERNKTQE) are compositionally biased toward basic and acidic residues. The interval 60 to 295 (ERNKTQEEHL…NLSLEELKDQ (236 aa)) is i; PA-binding region. The 213-residue stretch at 70–282 (KEIMKHIVKI…AFNYMDKFNE (213 aa)) folds into the ATLF-like 1 domain. The interval 296–330 (RMLARYEKWEKIKQHYQHWSDSLSEEGRGLLKKLQ) is IIA. A run of 5 repeats spans residues 315–333 (SDSLSEEGRGLLKKLQIPI), 342–357 (HSLSQEEKELLKRIQI), 360–378 (SDFLSTEEKEFLKKLQIDI), 380–397 (DSLSEEEKELLNRIQVDS), and 399–416 (NPLSEKEKEFLKKLKLDI). The 5 X approximate repeats stretch occupies residues 315-416 (SDSLSEEGRG…EFLKKLKLDI (102 aa)). The segment at 336–416 (KKDDIIHSLS…EFLKKLKLDI (81 aa)) is III. The IIB stretch occupies residues 420 to 583 (DINQRLQDTG…EYIRIDAKVV (164 aa)). Residues 585–809 (KSKIDTKIQE…NDQIKFIINS (225 aa)) form an IV region. Residues 609-804 (LPKYTKLITF…TFQFINDQIK (196 aa)) enclose the ATLF-like 2 domain. Zn(2+) is bound at residue His719. Catalysis depends on Glu720, which acts as the Proton acceptor. His723, Tyr761, and Glu768 together coordinate Zn(2+).

This sequence belongs to the peptidase M34 family. Interacts (via ATLF domain 1) with the cleaved form of protective antigen (PA-63) anthrax toxin; interaction is required for LF translocation into the host cytoplasm. Interacts with PA-63 homooligomers (either homoheptamers or homooctamers): three molecules of LF bind the PA-63 homoheptamer to form the PA(7)LF(3) complex, in which the relative position of the N-terminal alpha-helices in the three LFs determines which factor is translocated first. Requires Zn(2+) as cofactor.

The protein resides in the secreted. It is found in the host cytoplasm. Its subcellular location is the host cytosol. The catalysed reaction is Preferred amino acids around the cleavage site can be denoted BBBBxHx-|-H, in which B denotes Arg or Lys, H denotes a hydrophobic amino acid, and x is any amino acid. The only known protein substrates are mitogen-activated protein (MAP) kinase kinases.. Its activity is regulated as follows. Inhibited by NSC-12155 (1,3-Bis(2-methyl-4-aminoquinoline-6-yl)ure). Inhibited by phenoxyacetic acid bearing alpha-benzyl substituents on the C2-side chain. Inhibited by sulfonamide hydroxamate with benzylic additions at the sulfonamide nitrogen. Also inhibited by sulfonamide hydroxamates with alkylation at the sulfonamide nitrogen. Inhibited by hydroxamic acid inhibitors. Its function is as follows. Lethal factor (LF), which constitutes one of the three proteins composing the anthrax toxin, is able to trigger rapid cell death in macrophages. Acts as a protease that cleaves the N-terminal of most dual specificity mitogen-activated protein kinase kinases (MAPKKs or MAP2Ks) (except for MAP2K5): cleavage invariably occurs within the N-terminal proline-rich region preceding the kinase domain, thus disrupting a sequence involved in directing specific protein-protein interactions necessary for the assembly of signaling complexes. Also cleaves mouse Nlrp1b: host Nlrp1b cleavage promotes ubiquitination and degradation of the N-terminal part of Nlrp1b by the proteasome, thereby releasing the cleaved C-terminal part of Nlrp1b, which polymerizes and forms the Nlrp1b inflammasome followed by host cell pyroptosis. Able to cleave mouse Nlrp1b alleles 1 and 5, while it is not able to cleave Nlrp1b alleles 2, 3 and 4. In contrast, does not cleave NLRP1 human ortholog. LF is not toxic by itself and only acts as a lethal factor when associated with protective antigen (PA) to form the lethal toxin (LeTx): PA is required for LF translocation into the host cytosol. The protein is Lethal factor of Bacillus anthracis.